The primary structure comprises 408 residues: Transmembrane protein 237 (408 aa).

Residues 1–14 are compositionally biased toward basic and acidic residues; it reads MRTDSGARLEEGHL. A disordered region spans residues 1–137; it reads MRTDSGARLE…RRKTKKTQPA (137 aa). 2 positions are modified to phosphoserine: Ser25 and Ser49. Positions 60–77 are enriched in basic and acidic residues; that stretch reads RPSEGNEPSTKELKEHPE. Positions 95-106 are enriched in low complexity; the sequence is TSSTQKKSSSSS. 4 consecutive transmembrane segments (helical) span residues 227–247, 268–288, 303–323, and 358–378; these read MIGL…IVVI, LAYP…ISAF, FLAL…LILS, and WIVV…FLSY.

This sequence belongs to the TMEM237 family. Part of the tectonic-like complex (also named B9 complex). Interacts with TMEM107.

The protein localises to the membrane. It is found in the cell projection. It localises to the cilium. In terms of biological role, component of the transition zone in primary cilia. Required for ciliogenesis. The sequence is that of Transmembrane protein 237 (TMEM237) from Homo sapiens (Human).